Reading from the N-terminus, the 300-residue chain is Epimerase family protein SAB0724c (300 aa).

Belongs to the NAD(P)-dependent epimerase/dehydratase family. SDR39U1 subfamily.

The polypeptide is Epimerase family protein SAB0724c (Staphylococcus aureus (strain bovine RF122 / ET3-1)).